The sequence spans 445 residues: MSKKLYIKTYGCQMNVYDSVKIQDLLYPFGYESTEDIKEADIIILNTCHIREKAAEKTYSELGRIKKLQNTRKQEGLNPAIIVVAGCVAQAEGEEIFSRTPYVDIVVGPQSYYNLPELISKVVRHEKQLIDLDFVEEAKFDNLPEQLYPQGASSFISVQEGCDKFCTFCVVPYTRGAEFSRSVEQVYRESLKAVSNDAKEIILLGQNVNAYHGKGPKDKIFTLADLLKCLAQIPNLARLRYMTSHPIDMTDDLIKLHGTEPKLMPFLHLPVQSGSNKILKAMNRKHDRDYYFNIINRLREARSDIVLSSDFIVGFPGETEQDFEDTLDLVHRVKYGQCYSFKYSPRPGTPGAIRTDQIPEHIKSKRLTILQQELATQQLAFNQSCVGSTMRVLFDRDGKFEDQIIGKTPYMQSVYIHNPNKSLLGKIVDVIITKAALNSLTGEIL.

An MTTase N-terminal domain is found at 3 to 124 (KKLYIKTYGC…LPELISKVVR (122 aa)). Residues Cys-12, Cys-48, Cys-87, Cys-162, Cys-166, and Cys-169 each coordinate [4Fe-4S] cluster. A Radical SAM core domain is found at 148-380 (YPQGASSFIS…QQELATQQLA (233 aa)). One can recognise a TRAM domain in the interval 383–445 (QSCVGSTMRV…ALNSLTGEIL (63 aa)).

It belongs to the methylthiotransferase family. MiaB subfamily. In terms of assembly, monomer. The cofactor is [4Fe-4S] cluster.

It localises to the cytoplasm. The catalysed reaction is N(6)-dimethylallyladenosine(37) in tRNA + (sulfur carrier)-SH + AH2 + 2 S-adenosyl-L-methionine = 2-methylsulfanyl-N(6)-dimethylallyladenosine(37) in tRNA + (sulfur carrier)-H + 5'-deoxyadenosine + L-methionine + A + S-adenosyl-L-homocysteine + 2 H(+). Catalyzes the methylthiolation of N6-(dimethylallyl)adenosine (i(6)A), leading to the formation of 2-methylthio-N6-(dimethylallyl)adenosine (ms(2)i(6)A) at position 37 in tRNAs that read codons beginning with uridine. This Rickettsia prowazekii (strain Madrid E) protein is tRNA-2-methylthio-N(6)-dimethylallyladenosine synthase.